Consider the following 2479-residue polypeptide: Centrosomal protein of 290 kDa (2479 aa).

A self-association (with itself or C-terminus) region spans residues 1–695 (MPPNINWKEI…IESKNAEGIF (695 aa)). Coiled coils occupy residues 59 to 565 (MKMK…ERGK), 598 to 664 (SLKN…MQKD), 697 to 931 (ASLH…VCEK), 958 to 1027 (SLSE…IEQA), 1071 to 1498 (QRAE…ILSR), 1533 to 1584 (HTLK…LHIL), and 1635 to 2452 (DSLS…SEQL). The span at 149 to 163 (ALRNEEAENENSKLR) shows a compositional bias: basic and acidic residues. Residues 149-168 (ALRNEEAENENSKLRRENKR) are disordered. The segment at 696 to 896 (DASLHLKAQV…TVLQVNEKSL (201 aa)) is interaction with IQCB1. The self-association (with itself or N-terminus) stretch occupies residues 1966 to 2479 (TTGMTVDQVL…EESPVNFPIY (514 aa)). The interval 2458–2479 (SPVAASEEFEDEEESPVNFPIY) is disordered.

As to quaternary structure, part of the tectonic-like complex (also named B9 complex). Interacts with ATF4 via its N-terminal region. Associates with the BBSome complex, interacting (via N-terminus) with BBS4. Interacts with IQCB1/NPHP5; IQCB1 and CEP290/NPHP6 are proposed to form a functional NPHP5-6 module localized to the centrosome. Interacts with NPHP4; the interaction likely requires additional interactors. Interacts with ZNF423, FAM161A, CEP162, CEP162, CEP131, TALPID3, CCDC13, CC2D2A, RPGRIP1. Can self-associate (homo- or heteromeric). Interacts with CCP110; required for suppressing cilia formation. Interacts with RPGR. Associates (via C-terminus) with microtubules; association to microtubule is reduced in response to cellular stress, such as ultraviolet light (UV) radiation or heat shock, in a process that requires p38 MAP kinase signaling. Interacts with FAM161A. Interacts with PCM1. Interacts with CCDC66. Interacts with ARMC9 and CSPP1. Post-translationally, ubiquitinated. May undergo monoubiquitination; monoubiquitination is inhibited in response to cellular stress, such as ultraviolet light (UV) radiation or heat shock, but does not cause its displacement from centriolar satellites. Ubiquitous. Expressed strongly in placenta and weakly in brain.

Its subcellular location is the cytoplasm. The protein resides in the cytoskeleton. It is found in the microtubule organizing center. The protein localises to the centrosome. It localises to the centriolar satellite. Its subcellular location is the nucleus. The protein resides in the cell projection. It is found in the cilium. The protein localises to the cilium basal body. It localises to the centriole. Its subcellular location is the cytoplasmic vesicle. Its function is as follows. Involved in early and late steps in cilia formation. Its association with CCP110 is required for inhibition of primary cilia formation by CCP110. May play a role in early ciliogenesis in the disappearance of centriolar satellites and in the transition of primary ciliar vesicles (PCVs) to capped ciliary vesicles (CCVs). Required for the centrosomal recruitment of RAB8A and for the targeting of centriole satellite proteins to centrosomes such as of PCM1. Required for the correct localization of ciliary and phototransduction proteins in retinal photoreceptor cells; may play a role in ciliary transport processes. Required for efficient recruitment of RAB8A to primary cilium. In the ciliary transition zone is part of the tectonic-like complex which is required for tissue-specific ciliogenesis and may regulate ciliary membrane composition. Involved in regulation of the BBSome complex integrity, specifically for presence of BBS2, BBS5 and BBS8/TTC8 in the complex, and in ciliary targeting of selected BBSome cargos. May play a role in controlling entry of the BBSome complex to cilia possibly implicating IQCB1/NPHP5. Activates ATF4-mediated transcription. In Homo sapiens (Human), this protein is Centrosomal protein of 290 kDa (CEP290).